Consider the following 248-residue polypeptide: Probable transcriptional regulatory protein PHZ_c3068 (248 aa).

Belongs to the TACO1 family.

Its subcellular location is the cytoplasm. This is Probable transcriptional regulatory protein PHZ_c3068 from Phenylobacterium zucineum (strain HLK1).